A 637-amino-acid chain; its full sequence is Threonine--tRNA ligase (637 aa).

The TGS domain occupies 1–61; sequence MVTVTLPDGS…DADAQLAIVT (61 aa). The tract at residues 244–535 is catalytic; the sequence is DHRRLAKQLD…LIEHHAGNFP (292 aa). Zn(2+) contacts are provided by Cys-335, His-386, and His-512.

Belongs to the class-II aminoacyl-tRNA synthetase family. In terms of assembly, homodimer. The cofactor is Zn(2+).

It localises to the cytoplasm. The catalysed reaction is tRNA(Thr) + L-threonine + ATP = L-threonyl-tRNA(Thr) + AMP + diphosphate + H(+). Its function is as follows. Catalyzes the attachment of threonine to tRNA(Thr) in a two-step reaction: L-threonine is first activated by ATP to form Thr-AMP and then transferred to the acceptor end of tRNA(Thr). Also edits incorrectly charged L-seryl-tRNA(Thr). This is Threonine--tRNA ligase from Thiobacillus denitrificans (strain ATCC 25259 / T1).